The chain runs to 408 residues: uncharacterized protein (408 aa).

Belongs to the protein kinase superfamily. ADCK protein kinase family.

This is an uncharacterized protein from Synechocystis sp. (strain ATCC 27184 / PCC 6803 / Kazusa).